Consider the following 238-residue polypeptide: 1-(5-phosphoribosyl)-5-[(5-phosphoribosylamino)methylideneamino] imidazole-4-carboxamide isomerase (238 aa).

Aspartate 8 serves as the catalytic Proton acceptor. The Proton donor role is filled by aspartate 129.

It belongs to the HisA/HisF family.

It is found in the cytoplasm. The enzyme catalyses 1-(5-phospho-beta-D-ribosyl)-5-[(5-phospho-beta-D-ribosylamino)methylideneamino]imidazole-4-carboxamide = 5-[(5-phospho-1-deoxy-D-ribulos-1-ylimino)methylamino]-1-(5-phospho-beta-D-ribosyl)imidazole-4-carboxamide. It functions in the pathway amino-acid biosynthesis; L-histidine biosynthesis; L-histidine from 5-phospho-alpha-D-ribose 1-diphosphate: step 4/9. This is 1-(5-phosphoribosyl)-5-[(5-phosphoribosylamino)methylideneamino] imidazole-4-carboxamide isomerase from Anaeromyxobacter dehalogenans (strain 2CP-1 / ATCC BAA-258).